Here is a 143-residue protein sequence, read N- to C-terminus: Small ribosomal subunit protein uS12 (143 aa).

Position 62 is a hydroxyproline (Pro62).

It belongs to the universal ribosomal protein uS12 family. In terms of assembly, component of the 40S small ribosomal subunit.

It is found in the cytoplasm. The protein resides in the cytosol. The protein localises to the rough endoplasmic reticulum. This chain is Small ribosomal subunit protein uS12 (RPS23), found in Ciona intestinalis (Transparent sea squirt).